The following is a 1929-amino-acid chain: Myoferlin (1929 aa).

A disordered region spans residues 1-53 (MISYEPPPSAISNPTDPGGTTIIQGDGENDEEEDRDIVDAGFNPSVPGAPGQT). Over residues 27 to 36 (GENDEEEDRD) the composition is skewed to acidic residues. C2 domains lie at 62-179 (VKGK…RKWV) and 218-354 (EDDD…EEYD). Positions 267, 275, 323, 325, and 331 each coordinate Ca(2+). Residues 898-907 (RRLVRKRKKD) show a composition bias toward basic residues. The segment at 898–918 (RRLVRKRKKDPKVSTTSKAAL) is disordered. C2 domains follow at residues 996-1124 (GANT…LLWY), 1159-1283 (RAPQ…TKHE), 1408-1527 (IPYP…SHCG), and 1645-1793 (GPPG…EKCS). 4 residues coordinate Ca(2+): Asp-1028, Asp-1034, Asp-1090, and Asp-1092. The Ca(2+) site is built by Asp-1442, Asp-1448, Asp-1497, Asp-1499, Asp-1764, Ser-1767, and Asp-1770. The segment covering 1845–1858 (DAEERPAGKGRDEP) has biased composition (basic and acidic residues). The disordered stretch occupies residues 1845 to 1867 (DAEERPAGKGRDEPNMNPKLDPP). The chain crosses the membrane as a helical span at residues 1894 to 1914 (WVFIGLIILLLVLLFLGVFFY).

The protein belongs to the ferlin family. Ca(2+) is required as a cofactor.

It localises to the cell membrane. The protein resides in the nucleus membrane. It is found in the cytoplasmic vesicle membrane. In terms of biological role, may play a role in membrane regeneration and repair. This is Myoferlin (myof) from Xenopus tropicalis (Western clawed frog).